The primary structure comprises 221 residues: 2-C-methyl-D-erythritol 4-phosphate cytidylyltransferase (221 aa).

This sequence belongs to the IspD/TarI cytidylyltransferase family. IspD subfamily.

It carries out the reaction 2-C-methyl-D-erythritol 4-phosphate + CTP + H(+) = 4-CDP-2-C-methyl-D-erythritol + diphosphate. It functions in the pathway isoprenoid biosynthesis; isopentenyl diphosphate biosynthesis via DXP pathway; isopentenyl diphosphate from 1-deoxy-D-xylulose 5-phosphate: step 2/6. Its function is as follows. Catalyzes the formation of 4-diphosphocytidyl-2-C-methyl-D-erythritol from CTP and 2-C-methyl-D-erythritol 4-phosphate (MEP). The polypeptide is 2-C-methyl-D-erythritol 4-phosphate cytidylyltransferase (Roseobacter denitrificans (strain ATCC 33942 / OCh 114) (Erythrobacter sp. (strain OCh 114))).